Reading from the N-terminus, the 731-residue chain is Cucumisin (731 aa).

An N-terminal signal peptide occupies residues 1–22; sequence MSSSLIFKLFFFSLFFSNRLAS. A propeptide spans 23 to 110 (activation peptide); sequence RLDSDDDGKN…VFLNEMNELH (88 aa). Residues 34 to 110 form the Inhibitor I9 domain; sequence YIVYMGRKLE…VFLNEMNELH (77 aa). The 471-residue stretch at 114–584 folds into the Peptidase S8 domain; sequence SWDFLGFPLT…SGHVNPLKAV (471 aa). Asp140 serves as the catalytic Charge relay system. A disulfide bridge links Cys166 with Cys174. His204 (charge relay system) is an active-site residue. 2 disulfide bridges follow: Cys245–Cys250 and Cys380–Cys397. The N-linked (GlcNAc...) asparagine glycan is linked to Asn466. Residue Ser525 is the Charge relay system of the active site. Positions 616-731 are excised as a propeptide; it reads GDYSACTSGN…RSPITITSLV (116 aa). Asn652 carries N-linked (GlcNAc...) asparagine glycosylation.

The protein belongs to the peptidase S8 family. As to quaternary structure, monomer and dimer. In terms of processing, the C-terminal propeptide is autocleaved. As to expression, specifically expressed in fruits. Expressed in sarcocarp (at protein level).

It is found in the secreted. The enzyme catalyses Hydrolysis of proteins with broad specificity.. The sequence is that of Cucumisin from Cucumis melo (Muskmelon).